The primary structure comprises 119 residues: MSRSTSSDRRITRRKAILKQAKGFRGRRGTNFKAARDAVRKALLHSYVGRKDKKSDMRQIWITRINAAVRAEGITYSRFIAGMNKAGIQLNRKALSNMAIEDPTAFKAVVEASKKALGV.

This sequence belongs to the bacterial ribosomal protein bL20 family.

Its function is as follows. Binds directly to 23S ribosomal RNA and is necessary for the in vitro assembly process of the 50S ribosomal subunit. It is not involved in the protein synthesizing functions of that subunit. This is Large ribosomal subunit protein bL20 from Treponema denticola (strain ATCC 35405 / DSM 14222 / CIP 103919 / JCM 8153 / KCTC 15104).